The sequence spans 633 residues: Chaperone protein HtpG (633 aa).

Residues 1–344 form an a; substrate-binding region; sequence MSLQPQAETL…SNDLPLNISR (344 aa). The interval 345–560 is b; sequence ELLQSNEVIN…ENEMSGHLQR (216 aa). Residues 561 to 633 are c; sequence LLIQTGQDFM…KGLNELLLDS (73 aa).

It belongs to the heat shock protein 90 family. As to quaternary structure, homodimer.

It is found in the cytoplasm. In terms of biological role, molecular chaperone. Has ATPase activity. The chain is Chaperone protein HtpG from Coxiella burnetii (strain RSA 331 / Henzerling II).